Here is a 510-residue protein sequence, read N- to C-terminus: Peptide transporter imqJ (510 aa).

3 consecutive transmembrane segments (helical) span residues 1–21 (MVNQ…AVVA), 31–51 (IIFS…SSLP), and 57–77 (GISL…TGGI). A glycan (N-linked (GlcNAc...) asparagine) is linked at Asn-80. The next 4 helical transmembrane spans lie at 116 to 136 (IFTT…LITI), 143 to 163 (FSAA…IVLV), 231 to 251 (IFIL…NFIS), and 269 to 289 (IDPI…FPFL). The region spanning 348-468 (PAASEIRLLY…RCSSVFFFKA (121 aa)) is the Fe2OG dioxygenase domain. Fe cation is bound by residues His-377 and Asp-379. Asn-421 carries an N-linked (GlcNAc...) asparagine glycan. Residue His-439 coordinates Fe cation. Arg-459 provides a ligand contact to 2-oxoglutarate.

This sequence belongs to the major facilitator superfamily. Proton-dependent oligopeptide transporter (POT/PTR) (TC 2.A.17) family.

It localises to the membrane. In terms of biological role, peptide transporter; part of the gene cluster that mediates the biosynthesis of imizoquins A to D, tripeptide-derived alkaloids that serve a protective role against oxidative stress that are essential for normal germination. The protein is Peptide transporter imqJ of Aspergillus flavus (strain ATCC 200026 / FGSC A1120 / IAM 13836 / NRRL 3357 / JCM 12722 / SRRC 167).